The following is a 142-amino-acid chain: Large ribosomal subunit protein bL17 (142 aa).

Belongs to the bacterial ribosomal protein bL17 family. Part of the 50S ribosomal subunit. Contacts protein L32.

This chain is Large ribosomal subunit protein bL17, found in Methylocella silvestris (strain DSM 15510 / CIP 108128 / LMG 27833 / NCIMB 13906 / BL2).